The following is an 819-amino-acid chain: Lon protease (819 aa).

The disordered stretch occupies residues 1-36 (MDSTTNSDSPILDPNPEDVEKLLDESEEESEDQSTE). The Lon N-terminal domain maps to 43–240 (LFILPLNKRP…KALILLKKEL (198 aa)). Residue 393-400 (GPPGVGKT) participates in ATP binding. Positions 635–817 (STPVGVATGL…DDVLKVAFPK (183 aa)) constitute a Lon proteolytic domain. Active-site residues include Ser723 and Lys766.

It belongs to the peptidase S16 family. Homohexamer. Organized in a ring with a central cavity.

Its subcellular location is the cytoplasm. The catalysed reaction is Hydrolysis of proteins in presence of ATP.. In terms of biological role, ATP-dependent serine protease that mediates the selective degradation of mutant and abnormal proteins as well as certain short-lived regulatory proteins. Required for cellular homeostasis and for survival from DNA damage and developmental changes induced by stress. Degrades polypeptides processively to yield small peptide fragments that are 5 to 10 amino acids long. Binds to DNA in a double-stranded, site-specific manner. This Chlamydia pneumoniae (Chlamydophila pneumoniae) protein is Lon protease.